Here is a 62-residue protein sequence, read N- to C-terminus: Photosystem II reaction center protein Z (62 aa).

2 helical membrane-spanning segments follow: residues 8 to 28 (AVFA…VVFA) and 41 to 61 (FSGT…NSLI).

Belongs to the PsbZ family. As to quaternary structure, PSII is composed of 1 copy each of membrane proteins PsbA, PsbB, PsbC, PsbD, PsbE, PsbF, PsbH, PsbI, PsbJ, PsbK, PsbL, PsbM, PsbT, PsbY, PsbZ, Psb30/Ycf12, at least 3 peripheral proteins of the oxygen-evolving complex and a large number of cofactors. It forms dimeric complexes.

The protein localises to the plastid. It localises to the chloroplast thylakoid membrane. In terms of biological role, may control the interaction of photosystem II (PSII) cores with the light-harvesting antenna, regulates electron flow through the 2 photosystem reaction centers. PSII is a light-driven water plastoquinone oxidoreductase, using light energy to abstract electrons from H(2)O, generating a proton gradient subsequently used for ATP formation. This is Photosystem II reaction center protein Z from Piper cenocladum (Ant piper).